The following is a 316-amino-acid chain: Pantothenate kinase (316 aa).

ATP is bound at residue Gly-95–Ser-102.

Belongs to the prokaryotic pantothenate kinase family.

It localises to the cytoplasm. The catalysed reaction is (R)-pantothenate + ATP = (R)-4'-phosphopantothenate + ADP + H(+). Its pathway is cofactor biosynthesis; coenzyme A biosynthesis; CoA from (R)-pantothenate: step 1/5. The polypeptide is Pantothenate kinase (Serratia proteamaculans (strain 568)).